The primary structure comprises 161 residues: Probable K(+)/H(+) antiporter subunit E (161 aa).

2 helical membrane passes run 4-21 (WFPYPLLSIALLLMWLLL) and 28-50 (GSIVLGLVVSTVLAWVTLNLQPA).

Belongs to the CPA3 antiporters (TC 2.A.63) subunit E family. As to quaternary structure, may form a hetero-oligomeric complex that consists of six subunits: PhaAB, PhaC, PhaD, PhaE, PhaF and PhaG.

It localises to the cell membrane. In terms of biological role, part of a K(+) efflux system which is required for the adaptation of R.meliloti to alkaline pH as well as for the infection process during symbiotic nodule development. This Rhizobium meliloti (strain 1021) (Ensifer meliloti) protein is Probable K(+)/H(+) antiporter subunit E (phaE).